The primary structure comprises 485 residues: NADH-quinone oxidoreductase subunit N (485 aa).

14 helical membrane-spanning segments follow: residues 8–28 (LIALLPLLIVGLTVVVVMLSI), 35–55 (FLNATLSVIGLNAALVSLWFV), 71–91 (GFAMLYTGLVLLASLATCTFA), 105–125 (FYLLVLIASLGGILLANANHL), 127–147 (ALFLGIELISLPLFGLIGYAF), 159–179 (YTILSAAASSFLLFGMALVYA), 203–223 (LLAGFGLMIVGLGFKLSLAPF), 235–255 (PAPVSTFLATASKIAIFGVVM), 271–291 (VVLGIIAFASIIFGNLMALSQ), 297–317 (LLGYSSISHLGYLLVALIALQ), 326–346 (VGVYLAGYLFSSLGAFGVVSL), 373–393 (AAVMTVMMLSLAGIPMTLGFI), 408–430 (WWLVAAVVVGSAIGLYYYLRVAV), and 455–475 (IVVLISALLVLVLGVWPQPLI).

The protein belongs to the complex I subunit 2 family. In terms of assembly, NDH-1 is composed of 13 different subunits. Subunits NuoA, H, J, K, L, M, N constitute the membrane sector of the complex.

Its subcellular location is the cell inner membrane. The enzyme catalyses a quinone + NADH + 5 H(+)(in) = a quinol + NAD(+) + 4 H(+)(out). NDH-1 shuttles electrons from NADH, via FMN and iron-sulfur (Fe-S) centers, to quinones in the respiratory chain. The immediate electron acceptor for the enzyme in this species is believed to be ubiquinone. Couples the redox reaction to proton translocation (for every two electrons transferred, four hydrogen ions are translocated across the cytoplasmic membrane), and thus conserves the redox energy in a proton gradient. The sequence is that of NADH-quinone oxidoreductase subunit N from Salmonella paratyphi C (strain RKS4594).